A 78-amino-acid chain; its full sequence is Protein GPR15LG (78 aa).

The N-terminal stretch at 1–24 is a signal peptide; the sequence is MRLLALSGLLCMLLLCFCIFSSEG. 2 disulfides stabilise this stretch: cysteine 37/cysteine 60 and cysteine 38/cysteine 57.

Interacts with SUSD2; the interaction is direct. As to expression, highly abundant in the testis, colon, eye, and tongue. Detected in the epithelial layer of the colon, but not the small intestine.

Its subcellular location is the secreted. Functionally, highly cationic protein that has multiple functions. Acts as a chemotactic factor that mediates lymphocytes recruitment to epithelia through binding and activation of the G-protein coupled receptor GPR15. May be a tumor suppressor; together with SUSD2 has a growth inhibitory effect on colon cancer cells which includes G1 cell cycle arrest. May regulate keratinocyte proliferation. In addition, through activation of Mas-related G protein-coupled receptors (MRGPRs) contributes to pruritogenesis by activating itch-selective sensory neurons and mast cells degranulation. Its function is as follows. Has antimicrobial activity against Gram-positive bacteria, including Staphylococcus aureus and Actinomyces spec., and Mycoplasma hominis and lentivirus. This chain is Protein GPR15LG (Gpr15lg), found in Mus musculus (Mouse).